We begin with the raw amino-acid sequence, 367 residues long: Viral cathepsin (367 aa).

The signal sequence occupies residues 1–25 (MRKYHSNIMHKIITFVSLLWTFVVC). Positions 26–156 (DEISLHTSSS…IVKGAPDIRL (131 aa)) are cleaved as a propeptide — activation peptide. N-linked (GlcNAc...) asparagine; by host glycosylation is found at N103 and N135. 3 disulfides stabilise this stretch: C177–C218, C211–C251, and C306–C354. C180 is an active-site residue. Catalysis depends on residues H313 and N333.

The protein belongs to the peptidase C1 family. Synthesized as an inactive proenzyme and activated by proteolytic removal of the inhibitory propeptide.

The catalysed reaction is Endopeptidase of broad specificity, hydrolyzing substrates of both cathepsin L and cathepsin B.. Functionally, cysteine protease that plays an essential role in host liquefaction to facilitate horizontal transmission of the virus. May participate in the degradation of foreign protein expressed by the baculovirus system. The polypeptide is Viral cathepsin (VCATH) (Lepidoptera (butterflies and moths)).